Reading from the N-terminus, the 152-residue chain is Xanthine-guanine phosphoribosyltransferase (152 aa).

Residues 37–38 (RG), Arg-69, and 88–96 (DDLVDTGGT) each bind 5-phospho-alpha-D-ribose 1-diphosphate. Position 69 (Arg-69) interacts with GMP. Asp-89 lines the Mg(2+) pocket. The guanine site is built by Asp-92 and Ile-135. Xanthine is bound by residues Asp-92 and Ile-135. Residues 92-96 (DTGGT) and 134-135 (WI) each bind GMP.

This sequence belongs to the purine/pyrimidine phosphoribosyltransferase family. XGPT subfamily. As to quaternary structure, homotetramer. The cofactor is Mg(2+).

It localises to the cell inner membrane. The enzyme catalyses GMP + diphosphate = guanine + 5-phospho-alpha-D-ribose 1-diphosphate. It catalyses the reaction XMP + diphosphate = xanthine + 5-phospho-alpha-D-ribose 1-diphosphate. The catalysed reaction is IMP + diphosphate = hypoxanthine + 5-phospho-alpha-D-ribose 1-diphosphate. The protein operates within purine metabolism; GMP biosynthesis via salvage pathway; GMP from guanine: step 1/1. It functions in the pathway purine metabolism; XMP biosynthesis via salvage pathway; XMP from xanthine: step 1/1. Its function is as follows. Purine salvage pathway enzyme that catalyzes the transfer of the ribosyl-5-phosphate group from 5-phospho-alpha-D-ribose 1-diphosphate (PRPP) to the N9 position of the 6-oxopurines guanine and xanthine to form the corresponding ribonucleotides GMP (guanosine 5'-monophosphate) and XMP (xanthosine 5'-monophosphate), with the release of PPi. To a lesser extent, also acts on hypoxanthine. This is Xanthine-guanine phosphoribosyltransferase from Klebsiella pneumoniae (strain 342).